The chain runs to 549 residues: FMRFamide receptor (549 aa).

The Extracellular segment spans residues 1–117 (MSGTAVARLL…NNRIEFWVCG (117 aa)). N-linked (GlcNAc...) asparagine glycans are attached at residues asparagine 59, asparagine 70, and asparagine 93. The chain crosses the membrane as a helical span at residues 118-138 (VLINIVGVLGILGNIISMIIL). Residues 139 to 158 (SRPQMRSSINYLLTGLARCD) lie on the Cytoplasmic side of the membrane. A helical transmembrane segment spans residues 159–179 (TVLIITSILLFGIPSIYPYTG). The Extracellular segment spans residues 180–181 (HF). Residues 182 to 202 (FGYYNYVYPFISPAVFPIGMI) form a helical membrane-spanning segment. Topologically, residues 203-238 (AQTASIYMTFTVTLERYVAVCHPLKARALCTYGRAK) are cytoplasmic. Residues 239 to 259 (IYFIVCVCFSLAYNMPRFWEV) form a helical membrane-spanning segment. Topologically, residues 260–289 (LTVTYPEPGKDVILHCVRPSRLRRSETYIN) are extracellular. Residues 290-310 (IYIHWCYLIVNYIIPFLTLAI) form a helical membrane-spanning segment. Residues 311-341 (LNCLIYRQVKRANRERQRLSRSEKREIGLAT) lie on the Cytoplasmic side of the membrane. The chain crosses the membrane as a helical span at residues 342-362 (MLLCVVIVFFMLNFLPLVLNI). The Extracellular portion of the chain corresponds to 363-376 (SEAFYSTIDHKITK). The chain crosses the membrane as a helical span at residues 377–397 (ISNLLITINSSVNFLIYIIFG). The Cytoplasmic portion of the chain corresponds to 398–549 (EKFKRIFLLI…KKLGHVSSGF (152 aa)).

This sequence belongs to the G-protein coupled receptor 1 family. Expressed in ovaries, heads and bodies. Expressed in dopaminergic neurons.

It is found in the cell membrane. Its function is as follows. A receptor for the FMRFamide peptides. Reacts with high affinity to FMRFamide and intrinsic FMRFamide-related peptides. By stimulating intracellular calcium signaling through the inositol 1,4,5-trisphosphate receptor, Itpr, in dopaminergic neurons, may be involved in the maintenance of neuronal excitability and in the regulation of flight bout duration. This Drosophila melanogaster (Fruit fly) protein is FMRFamide receptor.